A 489-amino-acid polypeptide reads, in one-letter code: ATP synthase subunit beta, chloroplastic (489 aa).

170-177 (GGAGVGKT) lines the ATP pocket.

This sequence belongs to the ATPase alpha/beta chains family. As to quaternary structure, F-type ATPases have 2 components, CF(1) - the catalytic core - and CF(0) - the membrane proton channel. CF(1) has five subunits: alpha(3), beta(3), gamma(1), delta(1), epsilon(1). CF(0) has four main subunits: a(1), b(1), b'(1) and c(9-12).

It is found in the plastid. Its subcellular location is the chloroplast thylakoid membrane. The enzyme catalyses ATP + H2O + 4 H(+)(in) = ADP + phosphate + 5 H(+)(out). Produces ATP from ADP in the presence of a proton gradient across the membrane. The catalytic sites are hosted primarily by the beta subunits. The chain is ATP synthase subunit beta, chloroplastic from Zygnema circumcarinatum (Green alga).